Reading from the N-terminus, the 130-residue chain is Small ribosomal subunit protein uS8 (130 aa).

It belongs to the universal ribosomal protein uS8 family. In terms of assembly, part of the 30S ribosomal subunit. Contacts proteins S5 and S12.

In terms of biological role, one of the primary rRNA binding proteins, it binds directly to 16S rRNA central domain where it helps coordinate assembly of the platform of the 30S subunit. The chain is Small ribosomal subunit protein uS8 from Histophilus somni (strain 129Pt) (Haemophilus somnus).